The sequence spans 556 residues: 2-succinyl-5-enolpyruvyl-6-hydroxy-3-cyclohexene-1-carboxylate synthase (556 aa).

It belongs to the TPP enzyme family. MenD subfamily. Homodimer. Mg(2+) serves as cofactor. Requires Mn(2+) as cofactor. Thiamine diphosphate is required as a cofactor.

The catalysed reaction is isochorismate + 2-oxoglutarate + H(+) = 5-enolpyruvoyl-6-hydroxy-2-succinyl-cyclohex-3-ene-1-carboxylate + CO2. Its pathway is quinol/quinone metabolism; 1,4-dihydroxy-2-naphthoate biosynthesis; 1,4-dihydroxy-2-naphthoate from chorismate: step 2/7. It functions in the pathway quinol/quinone metabolism; menaquinone biosynthesis. Functionally, catalyzes the thiamine diphosphate-dependent decarboxylation of 2-oxoglutarate and the subsequent addition of the resulting succinic semialdehyde-thiamine pyrophosphate anion to isochorismate to yield 2-succinyl-5-enolpyruvyl-6-hydroxy-3-cyclohexene-1-carboxylate (SEPHCHC). The chain is 2-succinyl-5-enolpyruvyl-6-hydroxy-3-cyclohexene-1-carboxylate synthase from Enterobacter sp. (strain 638).